The sequence spans 337 residues: Alanine racemase (337 aa).

Lys33 acts as the Proton acceptor; specific for D-alanine in catalysis. Lys33 carries the N6-(pyridoxal phosphate)lysine modification. Residue Arg118 participates in substrate binding. Residue Tyr246 is the Proton acceptor; specific for L-alanine of the active site. Met292 is a binding site for substrate.

The protein belongs to the alanine racemase family. Requires pyridoxal 5'-phosphate as cofactor.

It carries out the reaction L-alanine = D-alanine. It functions in the pathway amino-acid biosynthesis; D-alanine biosynthesis; D-alanine from L-alanine: step 1/1. Catalyzes the interconversion of L-alanine and D-alanine. May also act on other amino acids. The sequence is that of Alanine racemase (alr) from Campylobacter curvus (strain 525.92).